Consider the following 1766-residue polypeptide: DNA-directed RNA polymerase II subunit RPB1-B (1766 aa).

Zn(2+)-binding residues include Cys69, Cys72, Cys79, and His82. Mg(2+)-binding residues include Asp487, Asp489, and Asp491. Residues 813–825 (PHEFFFHTMAGRE) form a bridging helix region. Positions 1660–1766 (HAMSSAAPPS…EFGDEEEEEQ (107 aa)) are disordered. Residues 1706 to 1716 (RGDEPSTHRSD) are compositionally biased toward basic and acidic residues. A compositionally biased stretch (low complexity) spans 1742-1756 (PTAKTPQQAAPPTAA).

It belongs to the RNA polymerase beta' chain family. In terms of assembly, component of the RNA polymerase II (Pol II) complex consisting of 12 subunits.

The protein resides in the nucleus. It carries out the reaction RNA(n) + a ribonucleoside 5'-triphosphate = RNA(n+1) + diphosphate. Functionally, DNA-dependent RNA polymerase catalyzes the transcription of DNA into RNA using the four ribonucleoside triphosphates as substrates. Largest and catalytic component of RNA polymerase II which synthesizes mRNA precursors and many functional non-coding RNAs. Forms the polymerase active center together with the second largest subunit. Pol II is the central component of the basal RNA polymerase II transcription machinery. It is composed of mobile elements that move relative to each other. RPB1 is part of the core element with the central large cleft, the clamp element that moves to open and close the cleft and the jaws that are thought to grab the incoming DNA template. At the start of transcription, a single-stranded DNA template strand of the promoter is positioned within the central active site cleft of Pol II. A bridging helix emanates from RPB1 and crosses the cleft near the catalytic site and is thought to promote translocation of Pol II by acting as a ratchet that moves the RNA-DNA hybrid through the active site by switching from straight to bent conformations at each step of nucleotide addition. During transcription elongation, Pol II moves on the template as the transcript elongates. The sequence is that of DNA-directed RNA polymerase II subunit RPB1-B (TRP5.9) from Trypanosoma brucei brucei.